Consider the following 227-residue polypeptide: Cytochrome c oxidase subunit 2 (227 aa).

The Mitochondrial intermembrane portion of the chain corresponds to 1–14 (MAYPFQLGLQDATS). Residues 15–45 (PIMEELLHFHDHTLMIVFLISSLVLYIITLM) form a helical membrane-spanning segment. Residues 46 to 59 (LTTKLTHTSTMDAQ) lie on the Mitochondrial matrix side of the membrane. A helical membrane pass occupies residues 60–87 (EVETVWTILPAIILVLIALPSLRILYMM). Residues 88–227 (DEINNPSLTV…YFETWSALMV (140 aa)) lie on the Mitochondrial intermembrane side of the membrane. Residues H161, C196, E198, C200, H204, and M207 each coordinate Cu cation. Mg(2+) is bound at residue E198. Phosphotyrosine is present on Y218.

The protein belongs to the cytochrome c oxidase subunit 2 family. Component of the cytochrome c oxidase (complex IV, CIV), a multisubunit enzyme composed of 14 subunits. The complex is composed of a catalytic core of 3 subunits MT-CO1, MT-CO2 and MT-CO3, encoded in the mitochondrial DNA, and 11 supernumerary subunits COX4I, COX5A, COX5B, COX6A, COX6B, COX6C, COX7A, COX7B, COX7C, COX8 and NDUFA4, which are encoded in the nuclear genome. The complex exists as a monomer or a dimer and forms supercomplexes (SCs) in the inner mitochondrial membrane with NADH-ubiquinone oxidoreductase (complex I, CI) and ubiquinol-cytochrome c oxidoreductase (cytochrome b-c1 complex, complex III, CIII), resulting in different assemblies (supercomplex SCI(1)III(2)IV(1) and megacomplex MCI(2)III(2)IV(2)). Found in a complex with TMEM177, COA6, COX18, COX20, SCO1 and SCO2. Interacts with TMEM177 in a COX20-dependent manner. Interacts with COX20. Interacts with COX16. It depends on Cu cation as a cofactor.

The protein resides in the mitochondrion inner membrane. The catalysed reaction is 4 Fe(II)-[cytochrome c] + O2 + 8 H(+)(in) = 4 Fe(III)-[cytochrome c] + 2 H2O + 4 H(+)(out). Functionally, component of the cytochrome c oxidase, the last enzyme in the mitochondrial electron transport chain which drives oxidative phosphorylation. The respiratory chain contains 3 multisubunit complexes succinate dehydrogenase (complex II, CII), ubiquinol-cytochrome c oxidoreductase (cytochrome b-c1 complex, complex III, CIII) and cytochrome c oxidase (complex IV, CIV), that cooperate to transfer electrons derived from NADH and succinate to molecular oxygen, creating an electrochemical gradient over the inner membrane that drives transmembrane transport and the ATP synthase. Cytochrome c oxidase is the component of the respiratory chain that catalyzes the reduction of oxygen to water. Electrons originating from reduced cytochrome c in the intermembrane space (IMS) are transferred via the dinuclear copper A center (CU(A)) of subunit 2 and heme A of subunit 1 to the active site in subunit 1, a binuclear center (BNC) formed by heme A3 and copper B (CU(B)). The BNC reduces molecular oxygen to 2 water molecules using 4 electrons from cytochrome c in the IMS and 4 protons from the mitochondrial matrix. The polypeptide is Cytochrome c oxidase subunit 2 (MT-CO2) (Vulpes zerda (Fennec fox)).